The following is a 206-amino-acid chain: Protein FAM228A (206 aa).

This sequence belongs to the FAM228 family.

The polypeptide is Protein FAM228A (FAM228A) (Homo sapiens (Human)).